The following is a 1013-amino-acid chain: AP-2 complex subunit alpha-2 (1013 aa).

4 HEAT repeats span residues 254-289 (AMRA…VVKN), 354-391 (DIIK…VSNA), 393-430 (DIVE…DLSW), and 521-565 (TVST…CIDV). The disordered stretch occupies residues 652–676 (STDPESVARSLSHPNGTLSNIDPQT). Residues 663-675 (SHPNGTLSNIDPQ) are compositionally biased toward polar residues. The GAE domain maps to 742 to 841 (ALCLKDSGVL…LDFSYKFGTN (100 aa)). Positions 760–1013 (GIKAEWRGHH…DPGAMLAGLL (254 aa)) are required for AP180 binding.

This sequence belongs to the adaptor complexes large subunit family. Adaptor protein complex 2 (AP-2) is a heterotetramer composed of two large adaptins (alpha-type and beta-type subunits), a medium adaptin (mu-type subunit) and a small adaptin (sigma-type subunit). Interacts with AP180.

Its subcellular location is the membrane. The protein resides in the coated pit. In terms of biological role, subunit of the adaptor protein complex 2 (AP-2). Adaptor protein complexes function in protein transport via transport vesicles in different membrane traffic pathways. Adaptor protein complexes are vesicle coat components and appear to be involved in cargo selection and vesicle formation. AP-2 is involved in clathrin-dependent endocytosis in which cargo proteins are incorporated into vesicles surrounded by clathrin (clathrin-coated vesicles, CCVs) which are destined for fusion with the early endosome. The complex binds polyphosphoinositides. This chain is AP-2 complex subunit alpha-2 (ALPHAC-AD), found in Arabidopsis thaliana (Mouse-ear cress).